The following is a 118-amino-acid chain: Small ribosomal subunit protein eS10 (118 aa).

The segment at 91-118 (RLKNAPAERPRPSRGGPRRGGYRGRARD) is disordered. The span at 106–118 (GPRRGGYRGRARD) shows a compositional bias: basic residues.

The protein belongs to the eukaryotic ribosomal protein eS10 family. Component of the small ribosomal subunit. Mature ribosomes consist of a small (40S) and a large (60S) subunit. The 40S subunit contains about 32 different proteins and 1 molecule of RNA (18S). The 60S subunit contains 45 different proteins and 3 molecules of RNA (25S, 5.8S and 5S).

It localises to the cytoplasm. Functionally, component of the ribosome, a large ribonucleoprotein complex responsible for the synthesis of proteins in the cell. The small ribosomal subunit (SSU) binds messenger RNAs (mRNAs) and translates the encoded message by selecting cognate aminoacyl-transfer RNA (tRNA) molecules. The large subunit (LSU) contains the ribosomal catalytic site termed the peptidyl transferase center (PTC), which catalyzes the formation of peptide bonds, thereby polymerizing the amino acids delivered by tRNAs into a polypeptide chain. The nascent polypeptides leave the ribosome through a tunnel in the LSU and interact with protein factors that function in enzymatic processing, targeting, and the membrane insertion of nascent chains at the exit of the ribosomal tunnel. The chain is Small ribosomal subunit protein eS10 (RPS10) from Candida albicans (strain SC5314 / ATCC MYA-2876) (Yeast).